Reading from the N-terminus, the 472-residue chain is Lycopene beta cyclase, chloroplastic (472 aa).

The N-terminal 25 residues, 1–25 (MDALLTSPFIPLKKPSHNRKSNTTT), are a transit peptide targeting the chloroplast. The segment at 1–27 (MDALLTSPFIPLKKPSHNRKSNTTTAS) is disordered. 62–90 (LAVVGGGPAGLAVAKRVSDAGLSVCSIDP) is a binding site for NAD(+).

Belongs to the lycopene cyclase family. In terms of tissue distribution, expressed in flower buds and lips. Detected in roots and leaves.

The protein resides in the plastid. It is found in the chloroplast. The enzyme catalyses a carotenoid psi-end group = a carotenoid beta-end derivative. It participates in carotenoid biosynthesis; beta-carotene biosynthesis. Its pathway is carotenoid biosynthesis; beta-zeacarotene biosynthesis. Its function is as follows. Catalyzes the double cyclization reaction which converts lycopene to beta-carotene and neurosporene to beta-zeacarotene. The protein is Lycopene beta cyclase, chloroplastic (LCY-B) of Oncidium hybrid cultivar (Orchid).